The following is a 23-amino-acid chain: M-poneritoxin-Nc1a (23 aa).

It belongs to the non-disulfide-bridged peptide (NDBP) superfamily. Medium-length antimicrobial peptide (group 3) family. Ponericin-W subfamily. In terms of tissue distribution, expressed by the venom gland.

It is found in the secreted. The protein resides in the target cell membrane. Its function is as follows. Membrane-perturbating peptide with multiple activities. It is insecticidal, since it induces contractile paralysis in insects (L.cuprina) during several hours, and death after 24 hours. It shows antibacterial activity with higher activity against Gram-positive than Gram-negative bacteria. It is also antiparasitic, since it potently inhibits the larval development of the major pathogenic nematode of ruminants (H.contortus, IC(50)=5.1 uM), but fails to reduce the motility of adult males of the other nematode B.malayi. It also shows cytotoxic activity against HEK293 cells (EC(50)=12-14 uM) and induces hemolysis in human erythrocytes (EC(50)=28.6-48.2 uM). In addition, it causes an important increase in intracellular calcium concentration on neuronal and epithelial cell lines, which supports a non-specific membrane perturbation mechanism of action. In vivo, it induces pain by intraplantar injection into mice, suggesting a defensive function against vertebrate predators. The sequence is that of M-poneritoxin-Nc1a from Neoponera commutata (Large hunting ant).